The chain runs to 1244 residues: ATP-dependent helicase/nuclease subunit A (1244 aa).

The UvrD-like helicase ATP-binding domain occupies 4-477; sequence TKWTEEQLSA…IQLYKNFRSR (474 aa). 25 to 32 serves as a coordination point for ATP; sequence AAAGSGKT. Residues 517 to 811 form the UvrD-like helicase C-terminal domain; that stretch reads KNVDDIIGGP…RIMSIHKSKG (295 aa).

It belongs to the helicase family. AddA subfamily. In terms of assembly, heterodimer of AddA and AddB/RexB. Mg(2+) serves as cofactor.

It carries out the reaction Couples ATP hydrolysis with the unwinding of duplex DNA by translocating in the 3'-5' direction.. It catalyses the reaction ATP + H2O = ADP + phosphate + H(+). Functionally, the heterodimer acts as both an ATP-dependent DNA helicase and an ATP-dependent, dual-direction single-stranded exonuclease. Recognizes the chi site generating a DNA molecule suitable for the initiation of homologous recombination. The AddA nuclease domain is required for chi fragment generation; this subunit has the helicase and 3' -&gt; 5' nuclease activities. This Clostridium botulinum (strain Alaska E43 / Type E3) protein is ATP-dependent helicase/nuclease subunit A.